Here is a 264-residue protein sequence, read N- to C-terminus: Putative ankyrin repeat domain-containing protein 19 (264 aa).

ANK repeat units lie at residues 67–96 (KDRT…QINI), 100–129 (LNRT…NPNI), 133–162 (YSNT…NIEA), 166–195 (EGNT…NLHA), and 199–228 (FRRT…NIFS).

The protein is Putative ankyrin repeat domain-containing protein 19 (ANKRD19P) of Homo sapiens (Human).